Reading from the N-terminus, the 180-residue chain is MFPMLNGFMNYGQQTVRAARYIGQSFMITLSHTNRLPVTIQYPYEKSITSERFRGRIHFEFDKCIACEVCVRVCPIDLPVVDWRLETDIRKKRLLNYSIDFGICIFCGNCVEYCPTNCLSMTEEYELSTYDRHELNYNQISLGRLPMSVIGDYTIQTIMNSTQMKIAMDKSLDSRTITNY.

4Fe-4S ferredoxin-type domains lie at 55–84 (GRIH…VDWR) and 95–124 (LNYS…MTEE). 8 residues coordinate [4Fe-4S] cluster: Cys64, Cys67, Cys70, Cys74, Cys104, Cys107, Cys110, and Cys114.

The protein belongs to the complex I 23 kDa subunit family. As to quaternary structure, NDH is composed of at least 16 different subunits, 5 of which are encoded in the nucleus. It depends on [4Fe-4S] cluster as a cofactor.

Its subcellular location is the plastid. The protein localises to the chloroplast thylakoid membrane. The catalysed reaction is a plastoquinone + NADH + (n+1) H(+)(in) = a plastoquinol + NAD(+) + n H(+)(out). It carries out the reaction a plastoquinone + NADPH + (n+1) H(+)(in) = a plastoquinol + NADP(+) + n H(+)(out). In terms of biological role, NDH shuttles electrons from NAD(P)H:plastoquinone, via FMN and iron-sulfur (Fe-S) centers, to quinones in the photosynthetic chain and possibly in a chloroplast respiratory chain. The immediate electron acceptor for the enzyme in this species is believed to be plastoquinone. Couples the redox reaction to proton translocation, and thus conserves the redox energy in a proton gradient. This Illicium oligandrum (Star anise) protein is NAD(P)H-quinone oxidoreductase subunit I, chloroplastic.